We begin with the raw amino-acid sequence, 348 residues long: Protein RecA (348 aa).

Residue 65–72 (GPESSGKT) coordinates ATP.

This sequence belongs to the RecA family.

The protein resides in the cytoplasm. Can catalyze the hydrolysis of ATP in the presence of single-stranded DNA, the ATP-dependent uptake of single-stranded DNA by duplex DNA, and the ATP-dependent hybridization of homologous single-stranded DNAs. It interacts with LexA causing its activation and leading to its autocatalytic cleavage. This is Protein RecA from Saccharophagus degradans (strain 2-40 / ATCC 43961 / DSM 17024).